The sequence spans 463 residues: Glycine--tRNA ligase (463 aa).

R98 and E174 together coordinate substrate. Residues 206–208, 216–221, 290–291, and 334–337 contribute to the ATP site; these read RNE, FRTREF, EL, and GADR. Residue 221-225 participates in substrate binding; the sequence is FEQME. Residue 330–334 coordinates substrate; sequence EPSLG.

It belongs to the class-II aminoacyl-tRNA synthetase family. As to quaternary structure, homodimer.

Its subcellular location is the cytoplasm. The catalysed reaction is tRNA(Gly) + glycine + ATP = glycyl-tRNA(Gly) + AMP + diphosphate. Catalyzes the attachment of glycine to tRNA(Gly). The polypeptide is Glycine--tRNA ligase (Staphylococcus epidermidis (strain ATCC 35984 / DSM 28319 / BCRC 17069 / CCUG 31568 / BM 3577 / RP62A)).